The following is a 63-amino-acid chain: Large ribosomal subunit protein bL28 (63 aa).

The tract at residues 1–20 is disordered; the sequence is MSRRCAITGKGPMVGNNVSH.

It belongs to the bacterial ribosomal protein bL28 family.

The polypeptide is Large ribosomal subunit protein bL28 (Campylobacter curvus (strain 525.92)).